Consider the following 334-residue polypeptide: Ornithine carbamoyltransferase (334 aa).

Carbamoyl phosphate-binding positions include 57–60 (STRT), Q84, R108, and 135–138 (HPTQ). L-ornithine is bound by residues N169, D233, and 237 to 238 (SM). Carbamoyl phosphate is bound by residues 275-276 (CL) and R320.

Belongs to the aspartate/ornithine carbamoyltransferase superfamily. OTCase family.

The protein localises to the cytoplasm. It catalyses the reaction carbamoyl phosphate + L-ornithine = L-citrulline + phosphate + H(+). Its pathway is amino-acid biosynthesis; L-arginine biosynthesis; L-arginine from L-ornithine and carbamoyl phosphate: step 1/3. Functionally, reversibly catalyzes the transfer of the carbamoyl group from carbamoyl phosphate (CP) to the N(epsilon) atom of ornithine (ORN) to produce L-citrulline. This Aliivibrio fischeri (strain ATCC 700601 / ES114) (Vibrio fischeri) protein is Ornithine carbamoyltransferase.